Reading from the N-terminus, the 83-residue chain is Cell division topological specificity factor (83 aa).

Belongs to the MinE family.

In terms of biological role, prevents the cell division inhibition by proteins MinC and MinD at internal division sites while permitting inhibition at polar sites. This ensures cell division at the proper site by restricting the formation of a division septum at the midpoint of the long axis of the cell. In Buchnera aphidicola subsp. Schizaphis graminum (strain Sg), this protein is Cell division topological specificity factor.